The sequence spans 1906 residues: Retinoic acid-induced protein 1 (1906 aa).

6 disordered regions span residues 1-261 (MQSF…APGQ), 273-299 (RLSY…RHHA), 335-370 (YQTF…LENF), 469-520 (VSRT…YLSG), 538-571 (SPAR…SDDS), and 656-712 (SAWP…GTKP). A compositionally biased stretch (polar residues) spans 13–24 (KQQNYQQTSQET). The segment covering 66–75 (PSGTAAAVAA) has biased composition (low complexity). The segment covering 124 to 134 (PQPPPPQPQPL) has biased composition (pro residues). Residues 213-226 (SQSFPTSSTYSSSV) are compositionally biased toward low complexity. The span at 252-261 (TASSSLAPGQ) shows a compositional bias: polar residues. Composition is skewed to low complexity over residues 278–291 (QQQQ…QQQQ) and 339–353 (SPSS…VGRS). Serine 339 and serine 345 each carry phosphoserine. A Phosphothreonine modification is found at threonine 472. Positions 541–563 (RVNSNSKAKPESVSTCSVTSPDD) are enriched in polar residues. Serine 568 and serine 683 each carry phosphoserine. Position 696 is a phosphothreonine (threonine 696). Serine 805 is subject to Phosphoserine. Lysine 811 is covalently cross-linked (Glycyl lysine isopeptide (Lys-Gly) (interchain with G-Cter in SUMO2)). Lysine 819 participates in a covalent cross-link: Glycyl lysine isopeptide (Lys-Gly) (interchain with G-Cter in SUMO1). A phosphoserine mark is found at serine 880 and serine 892. A Glycyl lysine isopeptide (Lys-Gly) (interchain with G-Cter in SUMO1); alternate cross-link involves residue lysine 901. A Glycyl lysine isopeptide (Lys-Gly) (interchain with G-Cter in SUMO2); alternate cross-link involves residue lysine 901. Polar residues predominate over residues 937–947 (KVQSWFESSLS). Disordered stretches follow at residues 937–1299 (KVQS…ETPD), 1344–1570 (FACK…PLDP), 1613–1637 (VVNS…SSSS), 1746–1775 (AAAA…SARG), and 1794–1819 (EEAA…GGEA). Residues 950 to 962 (KPGEEGPDGERAP) are compositionally biased toward basic and acidic residues. A compositionally biased stretch (basic residues) spans 996 to 1005 (KSLRSRRVHR). Serine 1064 is modified (phosphoserine). Phosphothreonine is present on threonine 1068. A compositionally biased stretch (low complexity) spans 1101 to 1119 (PSPKAASSPSNPAALPVAS). Serine 1122 bears the Phosphoserine mark. 2 short sequence motifs (nuclear localization signal) span residues 1160–1177 (RRRP…TKKL) and 1223–1240 (KRKS…RNLV). A compositionally biased stretch (low complexity) spans 1242-1252 (RSRSSSSSNAS). Phosphoserine is present on residues serine 1352, serine 1358, and serine 1374. Residue lysine 1425 forms a Glycyl lysine isopeptide (Lys-Gly) (interchain with G-Cter in SUMO2) linkage. Serine 1431 is modified (phosphoserine). Positions 1444–1453 (PKKRSRKGRA) are enriched in basic residues. Composition is skewed to polar residues over residues 1482-1491 (SGTQGASEDN) and 1517-1534 (QPQT…YSSY). A compositionally biased stretch (basic residues) spans 1535-1545 (SKRKRLTRGRA). Over residues 1628–1637 (SSSASSSSSS) the composition is skewed to low complexity. The C2HC pre-PHD-type zinc-finger motif lies at 1780–1835 (LQSCYCCDGREDGGEEAAPADKGRKHECSKEAPAEPGGEAQEHWVHEACAVWTGGV). The segment covering 1798-1812 (PADKGRKHECSKEAP) has biased composition (basic and acidic residues). The PHD-type zinc finger occupies 1855 to 1903 (MMCSSCQEAGATIGCCHKGCLHTYHYPCASDAGCIFIEENFSLKCPKHK).

In terms of tissue distribution, expressed in all tissues examined with higher expression in the heart and brain. No expression was seen in the corpus callosum of the brain.

The protein resides in the cytoplasm. The protein localises to the nucleus. In terms of biological role, transcriptional regulator of the circadian clock components: CLOCK, BMAL1, BMAL2, PER1/3, CRY1/2, NR1D1/2 and RORA/C. Positively regulates the transcriptional activity of CLOCK a core component of the circadian clock. Regulates transcription through chromatin remodeling by interacting with other proteins in chromatin as well as proteins in the basic transcriptional machinery. May be important for embryonic and postnatal development. May be involved in neuronal differentiation. This chain is Retinoic acid-induced protein 1 (RAI1), found in Homo sapiens (Human).